Reading from the N-terminus, the 1159-residue chain is RNA-directed RNA polymerase (1159 aa).

The RdRp catalytic domain maps to 545-727 (LTYGVLAEDT…KALASYTGLE (183 aa)).

This sequence belongs to the reoviridae RNA-directed RNA polymerase family. In terms of assembly, interacts with VP3 (Potential). Interacts with VP2 (Potential). Interacts with NSP5; this interaction is probably necessary for the formation of functional virus factories.

It is found in the virion. It catalyses the reaction RNA(n) + a ribonucleoside 5'-triphosphate = RNA(n+1) + diphosphate. In terms of biological role, RNA-directed RNA polymerase that is involved in both transcription and genome replication. Together with VP3 capping enzyme, forms an enzyme complex positioned near the channels situated at each of the five-fold vertices of the core. Following infection, the outermost layer of the virus is lost, leaving a double-layered particle (DLP) made up of the core and VP6 shell. VP1 then catalyzes the transcription of fully conservative plus-strand genomic RNAs that are extruded through the DLP's channels into the cytoplasm where they function as mRNAs for translation of viral proteins. One copy of each of the viral (+)RNAs is also recruited during core assembly, together with newly synthesized polymerase complexes and VP2. The polymerase of these novo-formed particles catalyzes the synthesis of complementary minus-strands leading to dsDNA formation. To do so, the polymerase specifically recognizes conserved 3' sequence(s) in plus-strand RNA templates. Once dsRNA synthesis is complete, the polymerase switches to the transcriptional mode, thus providing secondary transcription. The polypeptide is RNA-directed RNA polymerase (Homo sapiens (Human)).